We begin with the raw amino-acid sequence, 35 residues long: uncharacterized protein (35 aa).

This is an uncharacterized protein from Haemophilus influenzae (strain ATCC 51907 / DSM 11121 / KW20 / Rd).